A 346-amino-acid chain; its full sequence is Holliday junction branch migration complex subunit RuvB (346 aa).

A large ATPase domain (RuvB-L) region spans residues 1–181 (MSDRNPLIDA…FGIPVRLNFY (181 aa)). ATP is bound by residues Leu-20, Arg-21, Gly-62, Lys-65, Thr-66, Thr-67, 128–130 (EDF), Arg-171, Tyr-181, and Arg-218. Residue Thr-66 participates in Mg(2+) binding. Residues 182-252 (TVEELEYIVR…IADEALSRLE (71 aa)) form a small ATPAse domain (RuvB-S) region. A head domain (RuvB-H) region spans residues 255 to 346 (NRGLDQLDRR…SQYGLFMEDE (92 aa)). DNA contacts are provided by Arg-291, Arg-310, and Arg-315.

This sequence belongs to the RuvB family. Homohexamer. Forms an RuvA(8)-RuvB(12)-Holliday junction (HJ) complex. HJ DNA is sandwiched between 2 RuvA tetramers; dsDNA enters through RuvA and exits via RuvB. An RuvB hexamer assembles on each DNA strand where it exits the tetramer. Each RuvB hexamer is contacted by two RuvA subunits (via domain III) on 2 adjacent RuvB subunits; this complex drives branch migration. In the full resolvosome a probable DNA-RuvA(4)-RuvB(12)-RuvC(2) complex forms which resolves the HJ.

Its subcellular location is the cytoplasm. It catalyses the reaction ATP + H2O = ADP + phosphate + H(+). Its function is as follows. The RuvA-RuvB-RuvC complex processes Holliday junction (HJ) DNA during genetic recombination and DNA repair, while the RuvA-RuvB complex plays an important role in the rescue of blocked DNA replication forks via replication fork reversal (RFR). RuvA specifically binds to HJ cruciform DNA, conferring on it an open structure. The RuvB hexamer acts as an ATP-dependent pump, pulling dsDNA into and through the RuvAB complex. RuvB forms 2 homohexamers on either side of HJ DNA bound by 1 or 2 RuvA tetramers; 4 subunits per hexamer contact DNA at a time. Coordinated motions by a converter formed by DNA-disengaged RuvB subunits stimulates ATP hydrolysis and nucleotide exchange. Immobilization of the converter enables RuvB to convert the ATP-contained energy into a lever motion, pulling 2 nucleotides of DNA out of the RuvA tetramer per ATP hydrolyzed, thus driving DNA branch migration. The RuvB motors rotate together with the DNA substrate, which together with the progressing nucleotide cycle form the mechanistic basis for DNA recombination by continuous HJ branch migration. Branch migration allows RuvC to scan DNA until it finds its consensus sequence, where it cleaves and resolves cruciform DNA. The polypeptide is Holliday junction branch migration complex subunit RuvB (Brucella melitensis biotype 2 (strain ATCC 23457)).